A 317-amino-acid polypeptide reads, in one-letter code: Ribosomal RNA small subunit methyltransferase H (317 aa).

Residues 37-39 (AGH), Asp56, Phe85, Asp106, and Gln113 contribute to the S-adenosyl-L-methionine site.

It belongs to the methyltransferase superfamily. RsmH family.

Its subcellular location is the cytoplasm. The catalysed reaction is cytidine(1402) in 16S rRNA + S-adenosyl-L-methionine = N(4)-methylcytidine(1402) in 16S rRNA + S-adenosyl-L-homocysteine + H(+). Its function is as follows. Specifically methylates the N4 position of cytidine in position 1402 (C1402) of 16S rRNA. This chain is Ribosomal RNA small subunit methyltransferase H, found in Lactococcus lactis subsp. lactis (strain IL1403) (Streptococcus lactis).